An 88-amino-acid polypeptide reads, in one-letter code: HssA/B-like protein 9 (88 aa).

Positions 1-14 are enriched in polar residues; the sequence is MSILSALTSISNPM. The tract at residues 1-26 is disordered; that stretch reads MSILSALTSISNPMKSSKSSVANGGG.

Belongs to the hssA/B family.

The sequence is that of HssA/B-like protein 9 (hssl9) from Dictyostelium discoideum (Social amoeba).